A 531-amino-acid polypeptide reads, in one-letter code: Putative heme-binding protein HQ_1094A (531 aa).

Position 177 (His-177) interacts with heme. The interval 269–340 (AHGEAHGHAH…STNTNTQDSE (72 aa)) is disordered. A compositionally biased stretch (basic and acidic residues) spans 271-281 (GEAHGHAHGDS). A compositionally biased stretch (gly residues) spans 284 to 306 (GSGGGGGSSHGQSPGGASAGGSA). A compositionally biased stretch (basic and acidic residues) spans 308 to 317 (GTEDADHSDS). A compositionally biased stretch (low complexity) spans 318-338 (RSTTSADTTQSDTSTNTNTQD). An ABM domain is found at 441-529 (GTMGMFYTVK…VLSERPRHVF (89 aa)).

It in the N-terminal section; belongs to the ChdC family.

The chain is Putative heme-binding protein HQ_1094A from Haloquadratum walsbyi (strain DSM 16790 / HBSQ001).